A 110-amino-acid chain; its full sequence is Snake venom vascular endothelial growth factor toxin HF (110 aa).

The residue at position 1 (Q1) is a Pyrrolidone carboxylic acid. 3 disulfides stabilise this stretch: C14–C56, C45–C91, and C49–C93.

It belongs to the PDGF/VEGF growth factor family. Snake venom VEGF subfamily. As to quaternary structure, homodimer; disulfide-linked. Interacts with VEGF receptor-2 (KDR) with high affinity. Expressed by the venom gland.

It is found in the secreted. Snake venom VEGFs that may contribute to venom dispersion and prey subjugation by inducing vascular permeability and hypotension. This protein induces an increase in capillary permeability after intradermal injection, as well as a drastic hypotensive effect after intravenous injection. The hypotension is mediated by nitric oxide (NO), which is produced by VEGF-activated endothelium NO synthase. Also induces angiogenesis in vitro, probably through VEGF receptor (KDR/VEGFR-2) signaling. The protein is Snake venom vascular endothelial growth factor toxin HF of Vipera aspis aspis (Aspic viper).